Reading from the N-terminus, the 122-residue chain is MEIIHIGTDIIEISRIREAIATHGNRLLNRIFTEAEQKYCLEKTDPIPSFAGRFAGKEAVAKALGTGIGSVVAWKDIEVFKVSHGPEVLLPSHVYAKIGISKVILSISHCKEYATATAIALA.

D9 and E58 together coordinate Mg(2+).

Belongs to the P-Pant transferase superfamily. AcpS family. The cofactor is Mg(2+).

It localises to the cytoplasm. It carries out the reaction apo-[ACP] + CoA = holo-[ACP] + adenosine 3',5'-bisphosphate + H(+). Transfers the 4'-phosphopantetheine moiety from coenzyme A to a Ser of acyl-carrier-protein. The sequence is that of Holo-[acyl-carrier-protein] synthase from Chlamydia pneumoniae (Chlamydophila pneumoniae).